The primary structure comprises 426 residues: 5-aminovalerate aminotransferase DavT (426 aa).

Residues 112-113 (GS), tyrosine 139, and 240-243 (DEVQ) contribute to the pyridoxal 5'-phosphate site. Lysine 269 carries the N6-(pyridoxal phosphate)lysine modification. Pyridoxal 5'-phosphate is bound at residue threonine 298.

It belongs to the class-III pyridoxal-phosphate-dependent aminotransferase family. It depends on pyridoxal 5'-phosphate as a cofactor.

It catalyses the reaction 5-aminopentanoate + 2-oxoglutarate = 5-oxopentanoate + L-glutamate. Its function is as follows. Catalyzes the conversion of 5-aminovalerate to 5-oxopentanoate. This is 5-aminovalerate aminotransferase DavT (davT) from Pseudomonas aeruginosa (strain ATCC 15692 / DSM 22644 / CIP 104116 / JCM 14847 / LMG 12228 / 1C / PRS 101 / PAO1).